Reading from the N-terminus, the 660-residue chain is Long chain acyl-CoA synthetase 1 (660 aa).

225-236 serves as a coordination point for ATP; sequence IMYTSGTSGDPK. The segment at 492–516 is fatty acid-binding; it reads DGWFHTGDIGEILPNGVLKIIDRKK.

This sequence belongs to the ATP-dependent AMP-binding enzyme family. The cofactor is Mg(2+). In terms of tissue distribution, epidermal-specific expression along the entire stem. In cauline leaves, was expressed over the entire leaf surface, most strongly in trichomes and guard cells, but not in mesophyll cells. In flowers, the expression was detected in the stigma and filaments of the stamens, and in the carpel was expressed specifically in ovaries. In roots, was expressed in primary and lateral roots, but not in the root tips.

The protein localises to the endoplasmic reticulum. It catalyses the reaction a long-chain fatty acid + ATP + CoA = a long-chain fatty acyl-CoA + AMP + diphosphate. It participates in lipid metabolism; fatty acid metabolism. Functionally, activation of long-chain fatty acids for both synthesis of cellular lipids, and degradation via beta-oxidation. Acts in both the wax and cutin pathways. Preferentially uses palmitate, palmitoleate, linoleate and eicosenoate. Seems to have a specific activity against very long-chain fatty acid (VLCFA) class with acids longer than 24 carbons (C(24)). In Arabidopsis thaliana (Mouse-ear cress), this protein is Long chain acyl-CoA synthetase 1 (LACS1).